The chain runs to 170 residues: Extracellular globin-3 (170 aa).

The N-terminal stretch at 1–17 is a signal peptide; sequence MLRQLLVLVGLAVVCLA. A Globin domain is found at 23 to 169; that stretch reads CCSEEDHRIV…ILTKISSRLN (147 aa). Cysteine 24 and cysteine 156 are joined by a disulfide. Heme b is bound at residue histidine 119.

The protein belongs to the globin family. The extracellular hemoglobin of the earthworm consists of 12 subunits that have a hexagonal bilayer structure with a molecular weight near 3.8 million. Each one-twelfth subunit is composed primarily of disulfide linked trimers (chains A, B, and C) and monomers (chain D).

The protein localises to the secreted. This is Extracellular globin-3 from Lumbricus terrestris (Common earthworm).